We begin with the raw amino-acid sequence, 271 residues long: Aquaporin-11 (271 aa).

Residues 1–14 (MSPLLGLRSELQDT) lie on the Cytoplasmic side of the membrane. A helical membrane pass occupies residues 15–35 (CTSLGLMLSVVLLMGLARVVA). At 36–41 (RQQLHR) the chain is on the lumenal side. The chain crosses the membrane as a helical span at residues 42–62 (PVAHAFVLEFLATFQLCCCTH). The Cytoplasmic portion of the chain corresponds to 63 to 74 (ELQLLSEQHPAH). A helical membrane pass occupies residues 75–95 (PTWTLTLVYFFSLVHGLTLVG). The Lumenal segment spans residues 96–163 (TSSNPCGVMM…ACKNPIRVDL (68 aa)). Residues 99–101 (NPC) carry the NPC motif. A helical membrane pass occupies residues 164 to 184 (LKAVITEAVCSFLFHSALLHF). The Cytoplasmic segment spans residues 185–194 (QEVRTKLRIH). Residues 195–215 (LLAALITFLVYAGGSLTGAVF) traverse the membrane as a helical segment. Positions 216–218 (NPA) match the NPA motif. Residues 216–234 (NPALALSLHFMCFDEAFPQ) are Lumenal-facing. Residues 235-255 (FFIVYWLAPSLGILLMILMFS) form a helical membrane-spanning segment. The Cytoplasmic portion of the chain corresponds to 256–271 (FFLPWLHNNHTINKKE).

The protein belongs to the MIP/aquaporin (TC 1.A.8) family. AQP11/AQP12 subfamily. In terms of assembly, homodimer; disulfide-linked. Homotetramer. Can also form homomultimer. Not glycosylated. Detected in the sperm head and tail (at protein level). Expressed in subcutaneous adipocytes. Expressed in testis, kidney and ejaculated spermatozoa.

It is found in the endoplasmic reticulum membrane. The protein localises to the cytoplasmic vesicle membrane. The protein resides in the cell membrane. It carries out the reaction H2O(in) = H2O(out). It catalyses the reaction glycerol(in) = glycerol(out). The enzyme catalyses H2O2(out) = H2O2(in). In terms of biological role, channel protein that facilitates the transport of water, glycerol and hydrogen peroxide across membrane of cell or organelles guaranteeing intracellular homeostasis in several organes like liver, kidney and brain. In situation of stress, participates in endoplasmic reticulum (ER) homeostasis by regulating redox homeostasis through the transport of hydrogen peroxide across the endoplasmic reticulum membrane thereby regulating the oxidative stress through the NADPH oxidase 2 pathway. Plays a role by maintaining an environment suitable for translation or protein foldings in the ER lumen namely by participating in the PKD1 glycosylation processing resulting in regulation of PKD1 membrane trafficking thereby preventing the accumulation of unfolding protein in ER. Plays a role in the proximal tubule function by regulating its endosomal acidification. May play a role in postnatal kidney development. This is Aquaporin-11 from Homo sapiens (Human).